Reading from the N-terminus, the 248-residue chain is Triosephosphate isomerase (248 aa).

Residue 9 to 11 (NWK) coordinates substrate. Residue H94 is the Electrophile of the active site. Catalysis depends on E166, which acts as the Proton acceptor. Substrate contacts are provided by residues G172, S212, and 233-234 (GG).

This sequence belongs to the triosephosphate isomerase family. In terms of assembly, homodimer.

The protein resides in the cytoplasm. It carries out the reaction D-glyceraldehyde 3-phosphate = dihydroxyacetone phosphate. The protein operates within carbohydrate biosynthesis; gluconeogenesis. It functions in the pathway carbohydrate degradation; glycolysis; D-glyceraldehyde 3-phosphate from glycerone phosphate: step 1/1. Functionally, involved in the gluconeogenesis. Catalyzes stereospecifically the conversion of dihydroxyacetone phosphate (DHAP) to D-glyceraldehyde-3-phosphate (G3P). The polypeptide is Triosephosphate isomerase (Thermoanaerobacter pseudethanolicus (strain ATCC 33223 / 39E) (Clostridium thermohydrosulfuricum)).